The sequence spans 350 residues: Methylthioribose-1-phosphate isomerase (350 aa).

Substrate is bound by residues R47–A49, R90, and Q197. The active-site Proton donor is the D238. A substrate-binding site is contributed by N248 to K249.

It belongs to the eIF-2B alpha/beta/delta subunits family. MtnA subfamily.

It carries out the reaction 5-(methylsulfanyl)-alpha-D-ribose 1-phosphate = 5-(methylsulfanyl)-D-ribulose 1-phosphate. The protein operates within amino-acid biosynthesis; L-methionine biosynthesis via salvage pathway; L-methionine from S-methyl-5-thio-alpha-D-ribose 1-phosphate: step 1/6. Its function is as follows. Catalyzes the interconversion of methylthioribose-1-phosphate (MTR-1-P) into methylthioribulose-1-phosphate (MTRu-1-P). In Nitratidesulfovibrio vulgaris (strain DP4) (Desulfovibrio vulgaris), this protein is Methylthioribose-1-phosphate isomerase.